Reading from the N-terminus, the 368-residue chain is tRNA-specific 2-thiouridylase MnmA (368 aa).

Residues glycine 11–serine 18 and methionine 37 contribute to the ATP site. The interval asparagine 97 to aspartate 99 is interaction with target base in tRNA. The active-site Nucleophile is the cysteine 102. Cysteine 102 and cysteine 199 form a disulfide bridge. Residue glycine 127 participates in ATP binding. The segment at lysine 149–glutamine 151 is interaction with tRNA. Catalysis depends on cysteine 199, which acts as the Cysteine persulfide intermediate. Residues arginine 311–tyrosine 312 are interaction with tRNA.

It belongs to the MnmA/TRMU family. In terms of assembly, interacts with TusE.

The protein localises to the cytoplasm. It catalyses the reaction S-sulfanyl-L-cysteinyl-[protein] + uridine(34) in tRNA + AH2 + ATP = 2-thiouridine(34) in tRNA + L-cysteinyl-[protein] + A + AMP + diphosphate + H(+). Functionally, catalyzes the 2-thiolation of uridine at the wobble position (U34) of tRNA(Lys), tRNA(Glu) and tRNA(Gln), leading to the formation of s(2)U34, the first step of tRNA-mnm(5)s(2)U34 synthesis. Sulfur is provided by IscS, via a sulfur-relay system. Binds ATP and its substrate tRNAs. This Citrobacter koseri (strain ATCC BAA-895 / CDC 4225-83 / SGSC4696) protein is tRNA-specific 2-thiouridylase MnmA.